The chain runs to 417 residues: Serine hydroxymethyltransferase (417 aa).

(6S)-5,6,7,8-tetrahydrofolate-binding positions include leucine 122 and 126-128 (GHL). Lysine 230 carries the N6-(pyridoxal phosphate)lysine modification. (6S)-5,6,7,8-tetrahydrofolate is bound at residue 355-357 (SPF).

It belongs to the SHMT family. Homodimer. The cofactor is pyridoxal 5'-phosphate.

The protein resides in the cytoplasm. It catalyses the reaction (6R)-5,10-methylene-5,6,7,8-tetrahydrofolate + glycine + H2O = (6S)-5,6,7,8-tetrahydrofolate + L-serine. Its pathway is one-carbon metabolism; tetrahydrofolate interconversion. It functions in the pathway amino-acid biosynthesis; glycine biosynthesis; glycine from L-serine: step 1/1. Its function is as follows. Catalyzes the reversible interconversion of serine and glycine with tetrahydrofolate (THF) serving as the one-carbon carrier. This reaction serves as the major source of one-carbon groups required for the biosynthesis of purines, thymidylate, methionine, and other important biomolecules. Also exhibits THF-independent aldolase activity toward beta-hydroxyamino acids, producing glycine and aldehydes, via a retro-aldol mechanism. The chain is Serine hydroxymethyltransferase from Francisella tularensis subsp. mediasiatica (strain FSC147).